The following is a 4621-amino-acid chain: Dynein axonemal heavy chain 5 (4621 aa).

The stem stretch occupies residues 1–1938 (MFRIGRRQLW…MIHITDVAFI (1938 aa)). Coiled coils occupy residues 260 to 305 (WIKQ…DQLK) and 803 to 825 (LENA…DLIE). Residues 901–921 (VCHENASPSGNTSGRREGHSE) form a disordered region. 2 coiled-coil regions span residues 1065–1094 (AVKN…SINL) and 1433–1462 (DVNI…DWQA). AAA regions lie at residues 1939-2161 (YQNE…VLRT), 2221-2440 (TAIS…IQNL), 2547-2800 (VYPP…IWQG), and 2913-3167 (LYNE…FRRS). Residues 1977-1984 (GPAGTGKT) and 2259-2266 (GPSGSGKT) contribute to the ATP site. The interval 3182-3479 (YKFIYEEKHM…QTLLEDADRC (298 aa)) is stalk. Coiled coils occupy residues 3186–3299 (YEEK…QTIK), 3423–3490 (LKAN…STLI), and 3729–3814 (ILTE…EEYR). 2 AAA regions span residues 3564–3794 (LIDA…EVTQ) and 4009–4223 (ARKY…FIQN). Positions 4389–4417 (FLRQEIDRMQRVLSLVRSTLTELKLAVDG) form a coiled coil.

It belongs to the dynein heavy chain family. In terms of assembly, interacts with DNAL1. Consists of at least two heavy chains and a number of intermediate and light chains. In terms of tissue distribution, strongly expressed in lung and kidney and weaker expression seen in brain, heart and testis. In the brain, expressed in ependymal cells lining the brain ventricles and the aqueduct.

Its subcellular location is the cytoplasm. The protein localises to the cytoskeleton. It localises to the cilium axoneme. Force generating protein of respiratory cilia. Produces force towards the minus ends of microtubules. Dynein has ATPase activity; the force-producing power stroke is thought to occur on release of ADP. Required for structural and functional integrity of the cilia of ependymal cells lining the brain ventricles. This Mus musculus (Mouse) protein is Dynein axonemal heavy chain 5.